The following is a 415-amino-acid chain: Glycerate 2-kinase (415 aa).

Lysine 57 is a binding site for substrate.

The protein belongs to the glycerate kinase type-1 family. In terms of assembly, homodimer. Mg(2+) serves as cofactor. It depends on Ni(2+) as a cofactor. Mn(2+) is required as a cofactor. The cofactor is Co(2+).

The catalysed reaction is (R)-glycerate + ATP = (2R)-2-phosphoglycerate + ADP + H(+). In terms of biological role, catalyzes the ATP-dependent phosphorylation of D-glycerate to 2-phosphoglycerate. It can also partially utilize GTP, CTP or UTP as phosphate donor. This Picrophilus torridus (strain ATCC 700027 / DSM 9790 / JCM 10055 / NBRC 100828 / KAW 2/3) protein is Glycerate 2-kinase (gck).